A 187-amino-acid chain; its full sequence is Large ribosomal subunit protein uL5 (187 aa).

It belongs to the universal ribosomal protein uL5 family. As to quaternary structure, part of the 50S ribosomal subunit; part of the 5S rRNA/L5/L18/L25 subcomplex. Contacts the 5S rRNA and the P site tRNA. Forms a bridge to the 30S subunit in the 70S ribosome.

Its function is as follows. This is one of the proteins that bind and probably mediate the attachment of the 5S RNA into the large ribosomal subunit, where it forms part of the central protuberance. In the 70S ribosome it contacts protein S13 of the 30S subunit (bridge B1b), connecting the 2 subunits; this bridge is implicated in subunit movement. Contacts the P site tRNA; the 5S rRNA and some of its associated proteins might help stabilize positioning of ribosome-bound tRNAs. This Nocardia farcinica (strain IFM 10152) protein is Large ribosomal subunit protein uL5.